A 214-amino-acid polypeptide reads, in one-letter code: A-type ATP synthase subunit D (214 aa).

Belongs to the V-ATPase D subunit family. As to quaternary structure, has multiple subunits with at least A(3), B(3), C, D, E, F, H, I and proteolipid K(x).

It localises to the cell membrane. Functionally, component of the A-type ATP synthase that produces ATP from ADP in the presence of a proton gradient across the membrane. The sequence is that of A-type ATP synthase subunit D from Pyrococcus horikoshii (strain ATCC 700860 / DSM 12428 / JCM 9974 / NBRC 100139 / OT-3).